Consider the following 238-residue polypeptide: Uridylate kinase (238 aa).

Position 12-15 (12-15 (KLSG)) interacts with ATP. G54 serves as a coordination point for UMP. ATP contacts are provided by G55 and R59. UMP is bound by residues D74 and 135 to 142 (TGNPFFTT). Residues T162, Y168, and D171 each contribute to the ATP site.

It belongs to the UMP kinase family. Homohexamer.

Its subcellular location is the cytoplasm. It carries out the reaction UMP + ATP = UDP + ADP. The protein operates within pyrimidine metabolism; CTP biosynthesis via de novo pathway; UDP from UMP (UMPK route): step 1/1. Its activity is regulated as follows. Inhibited by UTP. Its function is as follows. Catalyzes the reversible phosphorylation of UMP to UDP. The chain is Uridylate kinase from Bordetella parapertussis (strain 12822 / ATCC BAA-587 / NCTC 13253).